A 364-amino-acid polypeptide reads, in one-letter code: MKRFFKPIEKENSPAAKKPCLSPEKRDGDGDGVEEEKNQNEPSKFMTWNANSFLLRVKNDWSQFSKFVSDFDPDVIAIQEVRMPAAGGKGKPKNHEELSDDTKVLREEKQILTRALSSPPFGNYGVWWSLADSKYAGTALLVKKCFKPRKVYFNLDKLASKHEPDGRVILAEFETFRLLNTYSPNNGWKDEENAFQRRRKWDKRIVEFLNKTSDKPLIWCGDLNVSHEEIDVSHPEFFATAKLNGYVPPNKEDCGQPGFTPSERGRFGATIKEGRLVDAYRYLHKEQEMESGFSWSGNPIGKYRGKRMRIDYFLVSEQLKDRIVSCKMHGRGIELEGFHGSDHCPVTLELSKPSSEMEQNQVSN.

Basic and acidic residues-rich tracts occupy residues 1 to 12 (MKRFFKPIEKEN) and 23 to 39 (PEKRDGDGDGVEEEKNQ). The disordered stretch occupies residues 1-42 (MKRFFKPIEKENSPAAKKPCLSPEKRDGDGDGVEEEKNQNEP). Residue E80 participates in Mg(2+) binding. Residue Y182 is part of the active site. 3 residues coordinate Mg(2+): D222, N224, and D342. The active-site Proton donor/acceptor is the D222.

Belongs to the DNA repair enzymes AP/exoA family. Interacts with ROS1. ROS1 is required for APE1L to stably associate with the DNA substrate. Mg(2+) is required as a cofactor. As to expression, expressed in leaves, flower buds and developing siliques. Not detected in roots.

It is found in the nucleus. The protein resides in the nucleolus. Its function is as follows. Apurinic/apyrimidinic (AP) endonuclease involved in active DNA demethylation and gene imprinting. According to a report, also displays an in vitro 3'-phosphatase activity. According to another report, has no in vitro 3'-phosphatase activity. Catalyzes the conversion of the 3'-blocking groups 3'-phosphor-alpha,beta-unsaturated aldehyde (3'-PUA) generated by ROS1 to 3'-OH. Has a strong non-specific affinity to DNA. Redundant with APE2 and at least one functional allele is required for seed viability. The protein is DNA-(apurinic or apyrimidinic site) endonuclease of Arabidopsis thaliana (Mouse-ear cress).